The following is a 145-amino-acid chain: UPF0735 ACT domain-containing protein CLH_2637 (145 aa).

The ACT domain occupies 69-144 (TFNLIVKDQT…YVEKIEFVAM (76 aa)).

The protein belongs to the UPF0735 family.

The polypeptide is UPF0735 ACT domain-containing protein CLH_2637 (Clostridium botulinum (strain Alaska E43 / Type E3)).